Here is a 357-residue protein sequence, read N- to C-terminus: Arginine kinase (357 aa).

The residue at position 2 (alanine 2) is an N-acetylalanine. The Phosphagen kinase N-terminal domain maps to lysine 9–lysine 91. Glycine 64–tyrosine 68 contributes to the L-arginine binding site. The 238-residue stretch at phenylalanine 119–methionine 356 folds into the Phosphagen kinase C-terminal domain. Residues serine 122 to arginine 126 and histidine 185 contribute to the ATP site. Glutamate 225 lines the L-arginine pocket. Arginine 229 provides a ligand contact to ATP. Position 271 (cysteine 271) interacts with L-arginine. ATP-binding positions include arginine 280 to histidine 284 and arginine 309 to glutamate 314. Glutamate 314 contributes to the L-arginine binding site.

Belongs to the ATP:guanido phosphotransferase family.

The enzyme catalyses L-arginine + ATP = N(omega)-phospho-L-arginine + ADP + H(+). The chain is Arginine kinase from Pachygrapsus marmoratus (Marbled rock crab).